The sequence spans 273 residues: Dormancy associated translation inhibitor (273 aa).

Interacts with human TLR2.

In terms of biological role, involved in translation regulation. Can also stimulate macrophages and peripheral blood mononuclear cells (PBMC) to secrete important cytokines that may be significant in granuloma formation and its maintenance. Increases secretion of IFN-gamma, TNF-alpha, IL-1 beta and IL-8 through human Toll-like receptor 2 (TLR2) signaling pathway. This is Dormancy associated translation inhibitor from Mycobacterium tuberculosis (strain CDC 1551 / Oshkosh).